The sequence spans 1433 residues: DNA-directed RNA polymerase subunit beta' (1433 aa).

Positions 66, 68, 81, and 84 each coordinate Zn(2+). Mg(2+) is bound by residues aspartate 473, aspartate 475, and aspartate 477. Residues cysteine 815, cysteine 889, cysteine 896, and cysteine 899 each coordinate Zn(2+).

The protein belongs to the RNA polymerase beta' chain family. In terms of assembly, the RNAP catalytic core consists of 2 alpha, 1 beta, 1 beta' and 1 omega subunit. When a sigma factor is associated with the core the holoenzyme is formed, which can initiate transcription. The cofactor is Mg(2+). Zn(2+) serves as cofactor.

The catalysed reaction is RNA(n) + a ribonucleoside 5'-triphosphate = RNA(n+1) + diphosphate. DNA-dependent RNA polymerase catalyzes the transcription of DNA into RNA using the four ribonucleoside triphosphates as substrates. The sequence is that of DNA-directed RNA polymerase subunit beta' from Porphyromonas gingivalis (strain ATCC 33277 / DSM 20709 / CIP 103683 / JCM 12257 / NCTC 11834 / 2561).